The following is a 374-amino-acid chain: Protein dip1 (374 aa).

The protein belongs to the LDB17 family.

The protein resides in the cytoplasm. It is found in the nucleus. The protein localises to the cell tip. May be involved in protein-linked oligosaccharide phosphorylation. The polypeptide is Protein dip1 (dip1) (Schizosaccharomyces pombe (strain 972 / ATCC 24843) (Fission yeast)).